The primary structure comprises 575 residues: G2/mitotic-specific cyclin-B3 (575 aa).

Residues 75–83 (RSALGNLTN) carry the D-box motif. Residue serine 215 is modified to Phosphoserine.

Belongs to the cyclin family. Cyclin AB subfamily. In terms of assembly, interacts with Cdk1 kinase. In terms of processing, ubiquitinated. Ubiquitination leads to its degradation in early anaphase. In terms of tissue distribution, in embryo, it is expressed in all mitotically proliferating cells, with a high level in neuroblasts. Not expressed in old embryos and thereafter. Not expressed in endoreplicating tissues.

The protein localises to the nucleus. Functionally, cyclins are positive regulatory subunits of the cyclin-dependent kinases (CDKs), and thereby play an essential role in the control of the cell cycle, notably via their destruction during cell division. Probably functions redundantly with other cyclins in regulation of cell cycle. Its presence may be required to delay a deadline for completing cytokinesis that is ordinary imposed by nuclear envelope reformation. Degradation of CycB and CycB3 promote cytokinesis furrow initiation and ingression. Required with CycB for female fertility. The protein is G2/mitotic-specific cyclin-B3 (CycB3) of Drosophila melanogaster (Fruit fly).